A 490-amino-acid polypeptide reads, in one-letter code: Ribulose bisphosphate carboxylase large chain (490 aa).

Substrate-binding residues include Asn-127 and Thr-177. Lys-179 functions as the Proton acceptor in the catalytic mechanism. Lys-181 provides a ligand contact to substrate. Mg(2+) is bound by residues Lys-205, Asp-207, and Glu-208. N6-carboxylysine is present on Lys-205. The active-site Proton acceptor is the His-297. Substrate contacts are provided by Arg-298, His-330, and Ser-382.

It belongs to the RuBisCO large chain family. Type I subfamily. As to quaternary structure, heterohexadecamer of 8 large chains and 8 small chains. Mg(2+) is required as a cofactor.

The protein localises to the plastid. The protein resides in the chloroplast. It carries out the reaction 2 (2R)-3-phosphoglycerate + 2 H(+) = D-ribulose 1,5-bisphosphate + CO2 + H2O. The catalysed reaction is D-ribulose 1,5-bisphosphate + O2 = 2-phosphoglycolate + (2R)-3-phosphoglycerate + 2 H(+). RuBisCO catalyzes two reactions: the carboxylation of D-ribulose 1,5-bisphosphate, the primary event in carbon dioxide fixation, as well as the oxidative fragmentation of the pentose substrate in the photorespiration process. Both reactions occur simultaneously and in competition at the same active site. This is Ribulose bisphosphate carboxylase large chain from Cylindrotheca sp. (strain N1) (Marine diatom).